The chain runs to 153 residues: Proline-rich membrane anchor 1 (153 aa).

An N-terminal signal peptide occupies residues 1–35 (MLLRDLVLRHGCCWPSLLLHCALHPLWGLVQVTHA). The Extracellular portion of the chain corresponds to 36-92 (EPQKSCSKVTDSCQHICQCRPPPPLPPPPPPPPPPRLLSAPAPNSTSCPAEDSWWSG). The PRAD domain occupies 56-70 (PPPPLPPPPPPPPPP). The span at 59–71 (PLPPPPPPPPPPR) shows a compositional bias: pro residues. A disordered region spans residues 59 to 79 (PLPPPPPPPPPPRLLSAPAPN). N-linked (GlcNAc...) asparagine glycosylation occurs at asparagine 79. Residues 93-113 (LVIIVAVVCASLVFLTVLVII) form a helical membrane-spanning segment. The Cytoplasmic segment spans residues 114-153 (CYKAIKRKPLRKDENGASVAEYPMSSSPSNKGVDVNAAVV). The interval 133 to 153 (AEYPMSSSPSNKGVDVNAAVV) is disordered.

As to quaternary structure, interacts with ACHE, probably through disulfide bonds. Isoforms 1 and 2 are expressed in the adult brain. In matured cortical neurons, only isoform 1 is detectable.

Its subcellular location is the cell membrane. The protein resides in the cell junction. It localises to the synapse. Required to anchor acetylcholinesterase (ACHE) to the basal lamina of the neuromuscular junction and to the membrane of neuronal synapses in brain. Organizes ACHE into tetramers. The chain is Proline-rich membrane anchor 1 (Prima1) from Rattus norvegicus (Rat).